Reading from the N-terminus, the 410-residue chain is MAKVSLEKDKIKFLLVEGVHQKALESLRAAGYTNIEFHKGALDDEQLKESIRDAHFIGLRSRTHLTEDVINAAEKLVAIGCFCIGTNQVDLDAAAKRGIPVFNAPFSNTRSVAELVIGELLLLLRGVPEANAKAHRGVWNKLAAGSFEARGKKLGIIGYGHIGTQLGILAESLGMYVYFYDIENKLPLGNATQVQHLSDLLNMSDVVSLHVPENPSTKNMMGAKEISLMKPGSLLINASRGTVVDIPALCDALASKHLAGAAIDVFPTEPATNSDPFTSPLCEFDNVLLTPHIGGSTQEAQENIGLEVAGKLIKYSDNGSTLSAVNFPEVSLPLHGGRRLMHIHENRPGVLTALNKIFAEQGVNIAAQYLQTSAQMGYVVIDIEADEDVAEKALQAMKAIPGTIRARLLY.

NAD(+)-binding positions include 161–162 (HI), Asp-181, 238–240 (ASR), and Asp-264. The active site involves Arg-240. Residue Glu-269 is part of the active site. His-292 functions as the Proton donor in the catalytic mechanism. Residue 292 to 295 (HIGG) coordinates NAD(+). One can recognise an ACT domain in the interval 339-410 (RLMHIHENRP…PGTIRARLLY (72 aa)).

Belongs to the D-isomer specific 2-hydroxyacid dehydrogenase family. As to quaternary structure, homotetramer.

The enzyme catalyses (2R)-3-phosphoglycerate + NAD(+) = 3-phosphooxypyruvate + NADH + H(+). The catalysed reaction is (R)-2-hydroxyglutarate + NAD(+) = 2-oxoglutarate + NADH + H(+). It participates in amino-acid biosynthesis; L-serine biosynthesis; L-serine from 3-phospho-D-glycerate: step 1/3. Its activity is regulated as follows. In bacteria displays feedback inhibition by L-serine. Catalyzes the reversible oxidation of 3-phospho-D-glycerate to 3-phosphonooxypyruvate, the first step of the phosphorylated L-serine biosynthesis pathway. Also catalyzes the reversible oxidation of 2-hydroxyglutarate to 2-oxoglutarate. The chain is D-3-phosphoglycerate dehydrogenase (serA) from Escherichia coli O6:H1 (strain CFT073 / ATCC 700928 / UPEC).